Reading from the N-terminus, the 443-residue chain is Nuclear hormone receptor family member nhr-60 (443 aa).

Residues 1-20 are compositionally biased toward low complexity; that stretch reads MIQSSSSISQDSLDLPSILS. The interval 1–40 is disordered; sequence MIQSSSSISQDSLDLPSILSTFSADEPEDEPSPTAVKSTK. A DNA-binding region (nuclear receptor) is located at residues 44–121; that stretch reads PTECLICGNS…VGMNPLAMEV (78 aa). 2 NR C4-type zinc fingers span residues 47-67 and 83-104; these read CLIC…CNGC and CKAK…CRAC. The region spanning 196 to 439 is the NR LBD domain; it reads NEFSGLEYLL…KDLVMRVIED (244 aa). Positions 225 to 249 are disordered; that stretch reads LRRDQLGPPRLPKPPSPGKPRDSQH. The segment covering 233–242 has biased composition (pro residues); sequence PRLPKPPSPG.

This sequence belongs to the nuclear hormone receptor family.

The protein resides in the nucleus. Orphan nuclear receptor (Potential). Required for embryonic and larval morphogenesis and probably for seam cell positioning and migration. In Caenorhabditis elegans, this protein is Nuclear hormone receptor family member nhr-60.